The primary structure comprises 466 residues: MTTAQPDAQPGAQPIADLGLKPGQLHLNPGVDDLYAHAIRLGEGVQAATGPLTVRTNKTGRSPKDRFIVEDDQTRETVWWEGFNQPISAEVFDRLLDKMVKYAEGRELFVQQVFAGTDAEHRIPVRMITEMAYHSLFIRNMFVRPTAEELQNFQAEWTVLNIPSFKADPAVDGTRTDTFILVNFSKKMIIAGGTQYAGENKKGIFGVLNYLLPAKGIMPMHCSANVGEDGDVALFFGLSGTGKTTLSADPGRKLIGDDEHGWTDTGVFNFEGGCYAKVINLSAEAEPAIYQTTRNYGTVLENVVLDESGTPDLDDGSLTENTRSAYPIEQIANIQPGSVGGIPKNVVFLTADAFGVLPPLSRLTPEQMMYQFISGFTAKIPGTEEGVTDPTPTFSTCFGAPFMPRHPGEYARLLAQKVEESGAKVWLVNTGWTGGKYGEGHRMSLNLTRLKSRDSHFADHCPPKQV.

Substrate contacts are provided by arginine 61, tyrosine 196, and lysine 202. Residues lysine 202, histidine 221, and 237–245 contribute to the ATP site; that span reads GLSGTGKTT. Residues lysine 202 and histidine 221 each coordinate Mn(2+). Aspartate 258 contributes to the Mn(2+) binding site. ATP is bound by residues glutamate 286, arginine 323, and threonine 448. Arginine 323 provides a ligand contact to substrate.

The protein belongs to the phosphoenolpyruvate carboxykinase (ATP) family. Mn(2+) serves as cofactor.

It localises to the cytoplasm. It catalyses the reaction oxaloacetate + ATP = phosphoenolpyruvate + ADP + CO2. Its pathway is carbohydrate biosynthesis; gluconeogenesis. Involved in the gluconeogenesis. Catalyzes the conversion of oxaloacetate (OAA) to phosphoenolpyruvate (PEP) through direct phosphoryl transfer between the nucleoside triphosphate and OAA. In Deinococcus radiodurans (strain ATCC 13939 / DSM 20539 / JCM 16871 / CCUG 27074 / LMG 4051 / NBRC 15346 / NCIMB 9279 / VKM B-1422 / R1), this protein is Phosphoenolpyruvate carboxykinase (ATP).